A 367-amino-acid polypeptide reads, in one-letter code: uncharacterized protein (367 aa).

It belongs to the Gfo/Idh/MocA family.

This is an uncharacterized protein from Streptococcus pneumoniae serotype 4 (strain ATCC BAA-334 / TIGR4).